We begin with the raw amino-acid sequence, 490 residues long: 5'-3' exonuclease PLD3 (490 aa).

The Cytoplasmic portion of the chain corresponds to 1–38 (MKPKLMYQELKVPAEEPANELPMNEIEAWKAAEKKARW). Residues 39 to 59 (VLLVLILAVVGFGALMTQLFL) traverse the membrane as a helical; Signal-anchor for type II membrane protein segment. Over 60–490 (WEYGDLHLFG…DSVGNACRLL (431 aa)) the chain is Lumenal. Intrachain disulfides connect Cys77–Cys239 and Cys81–Cys237. N-linked (GlcNAc...) asparagine glycans are attached at residues Asn97 and Asn132. Positions 196-223 (THGVLHTKFWVVDQTHFYLGSANMDWRS) constitute a PLD phosphodiesterase 1 domain. Active-site residues include His201, Lys203, and Asp208. The active-site Proton donor is His201. Residues His201 and Lys203 each coordinate phosphate. Position 218 (Asn218) interacts with phosphate. Asn236, Asn284, and Asn387 each carry an N-linked (GlcNAc...) asparagine glycan. Cys366 and Cys487 are joined by a disulfide. The region spanning 411 to 437 (YARVNHNKYMVTERATYIGTSNWSGNY) is the PLD phosphodiesterase 2 domain. His416 lines the phosphate pocket. Residue His416 is the Nucleophile of the active site. Phe438 provides a ligand contact to Mg(2+).

The protein belongs to the phospholipase D family. As to quaternary structure, homodimer. Interacts with APP. N-glycosylated. In terms of processing, proteolytically processed to a soluble form that is stable within endosomes and lysosomes. During transport through the secretory pathway becomes proteolysed by cysteine proteases, thereby releasing a stable soluble lysosomal lumenal polypeptide, whereas the transmembrane-bound fragment is rapidly degraded. Its transport route to lysosomes involves ubiquitination and the ESCRT complex. Post-translationally, ubiquitinated. Ubiquitination mediates sorting into lysosomes.

The protein resides in the endoplasmic reticulum membrane. It is found in the lysosome lumen. The protein localises to the early endosome membrane. It localises to the late endosome membrane. Its subcellular location is the golgi apparatus membrane. The protein resides in the endosome membrane. It carries out the reaction Exonucleolytic cleavage in the 5'- to 3'-direction to yield nucleoside 3'-phosphates.. The enzyme catalyses a 5'-end 5'-dephospho-ribonucleotidyl-ribonucleotide-RNA + H2O = a ribonucleoside 3'-phosphate + a 5'-end dephospho-ribonucleoside-RNA + H(+). It catalyses the reaction a ribonucleoside 3'-phosphate-2'-3'-cyclophospho-GMP + H2O = a ribonucleoside 3'-phosphate + 2',3'-cyclophospho-GMP + H(+). The catalysed reaction is a 5'-end 5'-dephospho-2'-deoxyribonucleotidyl-2'-deoxyribonucleotide in single-stranded DNA + H2O = a 5'-end dephospho-2'-deoxyribonucleoside in single-stranded DNA + a 2'-deoxyribonucleoside 3'-phosphate + H(+). It carries out the reaction a 5'-end 5'-phospho-2'-deoxyribonucleotide in single-stranded DNA + H2O = a 5'-end 5'-dephospho-2'-deoxyribonucleotide in single-stranded DNA + phosphate. The enzyme catalyses a 3-lyso-sn-glycero-1-phospho-(3'-acyl-1'-sn-glycerol) + a 1-acyl-sn-glycerol = a 3-acyl-sn-glycero-1-phospho-(3'-acyl-1'-sn-glycerol) + glycerol. It catalyses the reaction 3-lyso-sn-glycero-1-phospho-(3'-(9Z-octadecenoyl)-1'-sn-glycerol) + 1-(9Z-octadecenoyl)-sn-glycerol = 3-(9Z-octadecenoyl)-sn-glycero-1-phospho-(3'-(9Z-octadecenoyl)-1'-sn-glycerol) + glycerol. 5'-&gt;3' exonuclease that hydrolyzes the phosphodiester bond of single-stranded DNA (ssDNA) and RNA molecules to form nucleoside 3'-monophosphates and 5'-end 5'-hydroxy deoxyribonucleotide/ribonucleotide fragments. Partially redundant with PLD4, can cleave all four nucleotides displaying higher efficiency for ssDNA and RNA fragments initiated with uridine and guanosine residues and lower efficiency for cytidine-initiated substrates. As a result, it does not always degrade polynucleotides to the single nucleotide level, it can stall at specific sites sparing certain fragments from exonucleolytic degradation. Processes self and pathogenic ssDNA and RNA molecules that reach the endolysosomal compartment via phagocytosis or autophagy and may serve as 'danger' signals for recognition by innate immune receptors such as toll-like receptors (TLRs). Degrades mitochondrial CpG-rich ssDNA fragments to prevent TLR9 activation and autoinflammatory response, but it can cleave viral RNA to generate ligands for TLR7 activation and initiate antiviral immune responses. In plasmacytoid dendritic cells, it cooperates with endonuclease RNASET2 to release 2',3'-cyclic guanosine monophosphate (2',3'-cGMP), a potent stimulatory ligand for TLR7. Produces 2',3'-cGMPs and cytidine-rich RNA fragments that occupy TLR7 ligand-binding pockets and trigger a signaling-competent state. Can exert polynucleotide phosphatase activity toward 5'-phosphorylated ssDNA substrates although at a slow rate. Transphosphatidylase that catalyzes the exchange with R to S stereo-inversion of the glycerol moiety between (S,R)-lysophosphatidylglycerol (LPG) and monoacylglycerol (MAG) substrates to yield (S,S)-bis(monoacylglycero)phosphate (BMP). Can synthesize a variety of (S,S)-BMPs representing the main phospholipid constituent of lysosomal intralumenal vesicle (ILV) membranes that bind acid hydrolases for lipid degradation. Regulates the homeostasis and interorganellar communication of the endolysosomal system with an overall impact on cellular removal of dysfunctional organelles via autophagy as well as proper protein and lipid turnover. May play a role in myotube formation in response to ER stress. This chain is 5'-3' exonuclease PLD3 (PLD3), found in Pongo abelii (Sumatran orangutan).